Here is a 470-residue protein sequence, read N- to C-terminus: Rhamnulokinase (470 aa).

12–16 (ASSGR) contributes to the ATP binding site. Residues alanine 80 and 237–239 (HDT) contribute to the substrate site. Residue aspartate 238 is the Proton acceptor of the active site. Threonine 259 provides a ligand contact to ATP. Substrate is bound at residue asparagine 296. ATP is bound at residue glutamine 304. Cysteine 353 and cysteine 370 form a disulfide bridge. ATP is bound at residue glycine 402.

It belongs to the rhamnulokinase family. The cofactor is Mg(2+).

The catalysed reaction is L-rhamnulose + ATP = L-rhamnulose 1-phosphate + ADP + H(+). It functions in the pathway carbohydrate degradation; L-rhamnose degradation; glycerone phosphate from L-rhamnose: step 2/3. Functionally, involved in the catabolism of L-rhamnose (6-deoxy-L-mannose). Catalyzes the transfer of the gamma-phosphate group from ATP to the 1-hydroxyl group of L-rhamnulose to yield L-rhamnulose 1-phosphate. The chain is Rhamnulokinase from Oceanobacillus iheyensis (strain DSM 14371 / CIP 107618 / JCM 11309 / KCTC 3954 / HTE831).